Here is a 200-residue protein sequence, read N- to C-terminus: MQSSPLLENLVEHLRCLPGVGPKSAQRMAYHLLQRDRSGGMNLARALTDAMSKIGHCSQCRTFTEQETCAICDNPRRQHSGLLCVVEMPADIQAIEQTGQFSGRYFVLMGHLSPLDGIGPREIGLDLLQQRLQNEHFHEVILATNPTIEGDATANYIAEMCMQRNIKVSRIAHGIPVGGELETVDGTTLTHSFLGRRELG.

The C4-type zinc finger occupies 57–72 (CSQCRTFTEQETCAIC). The 96-residue stretch at 81–176 (GLLCVVEMPA…KVSRIAHGIP (96 aa)) folds into the Toprim domain.

The protein belongs to the RecR family.

In terms of biological role, may play a role in DNA repair. It seems to be involved in an RecBC-independent recombinational process of DNA repair. It may act with RecF and RecO. The chain is Recombination protein RecR from Actinobacillus succinogenes (strain ATCC 55618 / DSM 22257 / CCUG 43843 / 130Z).